The chain runs to 298 residues: UTP--glucose-1-phosphate uridylyltransferase (298 aa).

Belongs to the UDPGP type 2 family.

It carries out the reaction alpha-D-glucose 1-phosphate + UTP + H(+) = UDP-alpha-D-glucose + diphosphate. The protein operates within carbohydrate metabolism; nucleotide-sugar metabolism. It participates in capsule biogenesis; capsule polysaccharide biosynthesis. The protein is UTP--glucose-1-phosphate uridylyltransferase (galF) of Klebsiella pneumoniae.